The following is a 447-amino-acid chain: Nisin biosynthesis sensor protein NisK (447 aa).

A run of 2 helical transmembrane segments spans residues 15–35 (VIEI…LTFF) and 147–167 (TYLF…YHLI). A Histidine kinase domain is found at 235-447 (ALSHDVKTPL…GAEVILKIKK (213 aa)). H238 carries the post-translational modification Phosphohistidine; by autocatalysis.

The protein resides in the cell membrane. The catalysed reaction is ATP + protein L-histidine = ADP + protein N-phospho-L-histidine.. In terms of biological role, member of the two-component regulatory system NisK/NisR involved in the regulation of the biosynthesis of lantibiotic nisin. NisK may function as a membrane-associated protein kinase that phosphorylates NisR in response to environmental signals. This Lactococcus lactis subsp. lactis (Streptococcus lactis) protein is Nisin biosynthesis sensor protein NisK (nisK).